The primary structure comprises 327 residues: Phosphate acyltransferase (327 aa).

Belongs to the PlsX family. As to quaternary structure, homodimer. Probably interacts with PlsY.

The protein resides in the cytoplasm. It carries out the reaction a fatty acyl-[ACP] + phosphate = an acyl phosphate + holo-[ACP]. The protein operates within lipid metabolism; phospholipid metabolism. Catalyzes the reversible formation of acyl-phosphate (acyl-PO(4)) from acyl-[acyl-carrier-protein] (acyl-ACP). This enzyme utilizes acyl-ACP as fatty acyl donor, but not acyl-CoA. The protein is Phosphate acyltransferase of Thermosipho africanus (strain TCF52B).